A 247-amino-acid polypeptide reads, in one-letter code: MNNVDELTLDLPNFTGPLDLLLHLIRSQKIDIYDIPIAKITGQYLANLARWQTLDLQIAGEYFVMASTLLRIKSQYLLPKNDFIEEDQYQEDPRTELVEQLVQYSVFQRIAEYFKKRDEEMPITVAKDPSVSPKKEIEPLPLGEITSDELANTFKVVLERFKLRKPQVGKIEVHETSIEEMTSFLKNRLQKKRSTSFFDCIKSFQDLDQVIGLFLAVLELCRDHKILVKQNRDFGDLELEKVEINGK.

This sequence belongs to the ScpA family. In terms of assembly, component of a cohesin-like complex composed of ScpA, ScpB and the Smc homodimer, in which ScpA and ScpB bind to the head domain of Smc. The presence of the three proteins is required for the association of the complex with DNA.

The protein localises to the cytoplasm. In terms of biological role, participates in chromosomal partition during cell division. May act via the formation of a condensin-like complex containing Smc and ScpB that pull DNA away from mid-cell into both cell halves. The sequence is that of Segregation and condensation protein A from Lactobacillus johnsonii (strain CNCM I-12250 / La1 / NCC 533).